Reading from the N-terminus, the 506-residue chain is Anaerobic nitric oxide reductase transcription regulator NorR (506 aa).

4-aspartylphosphate is present on Asp-57. Positions 187–416 constitute a Sigma-54 factor interaction domain; sequence MIGLSPAMTQ…LEHAIHRAVV (230 aa). Residues 215–222 and 278–287 contribute to the ATP site; these read GETGTGKE and ADNGTLFLDE. The H-T-H motif DNA-binding region spans 481–500; it reads WAASARALETDVANLHRLAK.

Its pathway is nitrogen metabolism; nitric oxide reduction. Functionally, required for the expression of anaerobic nitric oxide (NO) reductase, acts as a transcriptional activator for at least the norVW operon. Activation also requires sigma-54. This Salmonella choleraesuis (strain SC-B67) protein is Anaerobic nitric oxide reductase transcription regulator NorR.